Consider the following 612-residue polypeptide: RNA polymerase sigma factor RpoD (612 aa).

Residues 191-206 (QQNNEEDEENNQEDHE) show a composition bias toward acidic residues. Residues 191 to 210 (QQNNEEDEENNQEDHEDDHS) are disordered. The segment at 378–448 (MVEANLRLVI…TRSIADQART (71 aa)) is sigma-70 factor domain-2. An Interaction with polymerase core subunit RpoC motif is present at residues 402–405 (DLIQ). The sigma-70 factor domain-3 stretch occupies residues 457-533 (ETINKLNRIS…DTTLELPLDS (77 aa)). The tract at residues 546 to 599 (VLSGLTAREAKVLRMRFGIDMNTDHTLEEVGKQFDVTRERIRQIEAKALRKLRH) is sigma-70 factor domain-4. A DNA-binding region (H-T-H motif) is located at residues 572 to 591 (LEEVGKQFDVTRERIRQIEA).

The protein belongs to the sigma-70 factor family. RpoD/SigA subfamily. As to quaternary structure, interacts transiently with the RNA polymerase catalytic core.

The protein resides in the cytoplasm. Functionally, sigma factors are initiation factors that promote the attachment of RNA polymerase to specific initiation sites and are then released. This sigma factor is the primary sigma factor during exponential growth. The sequence is that of RNA polymerase sigma factor RpoD from Buchnera aphidicola subsp. Acyrthosiphon pisum (strain APS) (Acyrthosiphon pisum symbiotic bacterium).